Reading from the N-terminus, the 410-residue chain is Pectate lyase PEL9 (410 aa).

An N-terminal signal peptide occupies residues 1 to 18; it reads MMGKSVWVFAALFPAVLA. Asp191, Asp215, Asp216, and Asp219 together coordinate Ca(2+). N-linked (GlcNAc...) asparagine glycosylation is present at Asn234. The Proton acceptor role is filled by Lys271. The span at 342–351 shows a compositional bias: polar residues; that stretch reads GEAPTSLSDE. Disordered regions lie at residues 342–361 and 381–410; these read GEAPTSLSDEQISDGNSWDG and ERNADGTIEPSGFLLPADGEEIGATTDWSA.

It belongs to the polysaccharide lyase 9 family. The cofactor is Ca(2+).

The protein resides in the secreted. It catalyses the reaction Eliminative cleavage of (1-&gt;4)-alpha-D-galacturonan to give oligosaccharides with 4-deoxy-alpha-D-galact-4-enuronosyl groups at their non-reducing ends.. Inhibited by iron ions. Activated in presence of the surfactant polysorbate 20, while inhibited in the presence of Triton X-100 and sodium dodecyl sulfate. Inhibited in presence of the organic solvents methanol, ethanol, propan-2-ol and acetone. Presents an endo-cleaving activity on the homogalacturonan (HG) region in pectin. Active on homogalacturonan with a degree of polymerization above 4, and does not appear to be affected by the degree of methylation of the substrate. Does not degrade linear rhamnogalacturonan. In Emericella nidulans (strain FGSC A4 / ATCC 38163 / CBS 112.46 / NRRL 194 / M139) (Aspergillus nidulans), this protein is Pectate lyase PEL9.